The primary structure comprises 381 residues: Ecotin-like protein 3 (381 aa).

A disordered region spans residues 232–381 (EHLEVCPKNN…GSKADPVDGK (150 aa)). The span at 273–292 (NESSPSRPRLSSTAYWPQEN) shows a compositional bias: polar residues. The span at 336 to 347 (RKAEDDVYEKTM) shows a compositional bias: basic and acidic residues. Residues 363-372 (SASSTKSGNG) show a composition bias toward polar residues.

This sequence belongs to the protease inhibitor I11 (ecotin) family.

The sequence is that of Ecotin-like protein 3 from Leishmania major.